Here is a 411-residue protein sequence, read N- to C-terminus: Secretion apparatus protein BsaZ (411 aa).

Helical transmembrane passes span 28-48 (IVALIVIATGALAAPALVDLT), 80-100 (IAAPFVLLCAAAGALPSLVQS), 137-157 (ALLYVGVFALTVRVFAGLYHA), and 175-195 (IVLTVRLVLLFLLCALPVLIL). A disordered region spans residues 341 to 411 (AANRGGPPPE…APARTGDQNA (71 aa)). The span at 370–404 (DACADNAFPDDAPPGAAAPNAGSPDGPAPDGGAPA) shows a compositional bias: low complexity.

This sequence belongs to the type III secretion exporter family.

Its subcellular location is the cell membrane. Its function is as follows. Part of the bsa type III secretion system, is involved in the intracellular replication of invading bacteria inside the host cell. Probably necessary for the lysis of the vacuole membrane and escape into the host cell cytoplasm. This is Secretion apparatus protein BsaZ (bsaZ) from Burkholderia pseudomallei (strain 1026b).